The primary structure comprises 989 residues: Vacuolar membrane protease (989 aa).

Positions 1 to 25 (MDRQSLRTTLRAMDASNENGSAKGA) are disordered. Residues 1–41 (MDRQSLRTTLRAMDASNENGSAKGAKKTTIGSFVRWTFGFN) lie on the Cytoplasmic side of the membrane. A helical transmembrane segment spans residues 42 to 62 (SVPLTTLVTITTVLLGLLVYV). Residues 63-383 (STSVNPPDVT…YLFIILPLQY (321 aa)) are Vacuolar-facing. Zn(2+) is bound by residues His181 and Asp193. The active-site Proton acceptor is Glu227. Glu228 serves as a coordination point for Zn(2+). A glycan (N-linked (GlcNAc...) asparagine) is linked at Asn245. Zn(2+) is bound by residues Glu253 and His325. The chain crosses the membrane as a helical span at residues 384 to 404 (IFVISCLTLAVGPIFVGFLFL). Over 405 to 426 (LVLRKQINAGTSETILGGWLRS) the chain is Cytoplasmic. Residues 427–447 (IVSVLVSVVATYFVVETLHLG) form a helical membrane-spanning segment. The Vacuolar segment spans residues 448–460 (NELYVVRSFYTPL). The helical transmembrane segment at 461–481 (FAGLGTFIFVNYVLLGFFHFV) threads the bilayer. The Cytoplasmic segment spans residues 482–488 (RPVCDQK). The helical transmembrane segment at 489–509 (LIILLELSVVLWVLLLLSVIH) threads the bilayer. Residues 510–520 (EATHKATGEYH) are Vacuolar-facing. Residues 521–541 (FLILYIVVATASILGLFGHLV) traverse the membrane as a helical segment. The Cytoplasmic segment spans residues 542 to 611 (TSTETSTFVE…IAVSMGYDWS (70 aa)). The disordered stretch occupies residues 548 to 576 (TFVEGPEDEEDTVDASEATETSPLLPEAS). Residues 552-561 (GPEDEEDTVD) show a composition bias toward acidic residues. The chain crosses the membrane as a helical span at residues 612 to 632 (IQFLLVVPITFFVTFGLAASL). The Vacuolar portion of the chain corresponds to 633 to 648 (LDGLHQTPLESEKSAD). The chain crosses the membrane as a helical span at residues 649–669 (FVYTTITAMSVLVGITFLPFV). Topologically, residues 670–673 (HKLQ) are cytoplasmic. Residues 674–694 (VFVPIVVVGVAVTASFVHILS) form a helical membrane-spanning segment. Residues 695 to 989 (PPFSSNAPAK…LVEVSKYVEL (295 aa)) are Vacuolar-facing. Residues Asn745, Asn793, and Asn822 are each glycosylated (N-linked (GlcNAc...) asparagine).

The protein belongs to the peptidase M28 family. It depends on Zn(2+) as a cofactor.

The protein localises to the vacuole membrane. In terms of biological role, may be involved in vacuolar sorting and osmoregulation. The polypeptide is Vacuolar membrane protease (Yarrowia lipolytica (strain CLIB 122 / E 150) (Yeast)).